The chain runs to 487 residues: GTPase Der (487 aa).

Residues methionine 1–arginine 20 form a disordered region. EngA-type G domains lie at proline 28–proline 197 and phenylalanine 225–arginine 401. GTP contacts are provided by residues glycine 34–serine 41, aspartate 83–leucine 87, asparagine 149–aspartate 152, glycine 231–serine 238, aspartate 278–isoleucine 282, and asparagine 343–aspartate 346. Positions arginine 402–arginine 486 constitute a KH-like domain.

This sequence belongs to the TRAFAC class TrmE-Era-EngA-EngB-Septin-like GTPase superfamily. EngA (Der) GTPase family. In terms of assembly, associates with the 50S ribosomal subunit.

Functionally, GTPase that plays an essential role in the late steps of ribosome biogenesis. This is GTPase Der from Leptospira borgpetersenii serovar Hardjo-bovis (strain L550).